Reading from the N-terminus, the 208-residue chain is Orotidine 5'-phosphate decarboxylase (208 aa).

Substrate is bound by residues aspartate 7, lysine 29, 57–66 (DLKLADIPNT), serine 109, 162–172 (PGIGAQGGKAK), glycine 185, and arginine 186. Lysine 59 acts as the Proton donor in catalysis.

The protein belongs to the OMP decarboxylase family. Type 1 subfamily. As to quaternary structure, homodimer.

It catalyses the reaction orotidine 5'-phosphate + H(+) = UMP + CO2. It functions in the pathway pyrimidine metabolism; UMP biosynthesis via de novo pathway; UMP from orotate: step 2/2. Functionally, catalyzes the decarboxylation of orotidine 5'-monophosphate (OMP) to uridine 5'-monophosphate (UMP). This is Orotidine 5'-phosphate decarboxylase (pyrF) from Pyrococcus horikoshii (strain ATCC 700860 / DSM 12428 / JCM 9974 / NBRC 100139 / OT-3).